The primary structure comprises 152 residues: Heavy metal-associated isoprenylated plant protein 22 (152 aa).

An HMA domain is found at 28-91 (MQTVNIKVKI…TVQSTGKKKA (64 aa)). Residues Cys39 and Cys42 each coordinate a metal cation. The interval 123 to 152 (SEQAQAQPGSTDDKLMSLFSDENPNACTVM) is disordered. Residues 142–152 (SDENPNACTVM) are compositionally biased toward polar residues. At Cys149 the chain carries Cysteine methyl ester. Cys149 carries S-farnesyl cysteine lipidation. Positions 150–152 (TVM) are cleaved as a propeptide — removed in mature form.

Belongs to the HIPP family. Interacts with ZHD11/HB29. Expressed in lateral roots and mature anthers.

The protein localises to the membrane. In terms of biological role, heavy-metal-binding protein. Binds cadmium. May be involved in cadmium transport and play a role in cadmium detoxification. The polypeptide is Heavy metal-associated isoprenylated plant protein 22 (Arabidopsis thaliana (Mouse-ear cress)).